The primary structure comprises 795 residues: Myosin light chain kinase 3 (795 aa).

The residue at position 155 (Ser155) is a Phosphoserine. Disordered regions lie at residues 236–257 and 305–328; these read GPGQ…ASEN and SSGP…GDAL. A phosphoserine mark is found at Ser351 and Ser432. A disordered region spans residues 367 to 452; that stretch reads DQIPKGARPF…GPGRTEAGRL (86 aa). The Protein kinase domain occupies 491 to 746; the sequence is VSQHEVLGGG…ATQCLKHEWL (256 aa). Residues 497–505 and Lys520 each bind ATP; that span reads LGGGRFGQV. Asp612 functions as the Proton acceptor in the catalytic mechanism.

It belongs to the protein kinase superfamily. CAMK Ser/Thr protein kinase family. Requires Mg(2+) as cofactor. Phosphorylated on serine residues. As to expression, restricted to cardiomyocytes (at protein level). Down-regulated in heart after experimental myocardial infarction at the protein level; no significant changes at the mRNA level.

It is found in the cytoplasm. It catalyses the reaction L-seryl-[myosin light chain] + ATP = O-phospho-L-seryl-[myosin light chain] + ADP + H(+). The enzyme catalyses L-threonyl-[myosin light chain] + ATP = O-phospho-L-threonyl-[myosin light chain] + ADP + H(+). Its function is as follows. Kinase that phosphorylates MYL2 in vitro. Has been proposed to be calmodulin-dependent, although MYL2 phosphorylation has also been observed in the presence or absence of calmodulin. Promotes sarcomere formation in cardiomyocytes and increases cardiomyocyte contractility. This is Myosin light chain kinase 3 (Mylk3) from Mus musculus (Mouse).